Reading from the N-terminus, the 138-residue chain is Low molecular weight protein-tyrosine-phosphatase PtpB (138 aa).

Residue Cys-7 is the Nucleophile of the active site. The active site involves Arg-13. Asp-111 (proton donor) is an active-site residue.

It belongs to the low molecular weight phosphotyrosine protein phosphatase family.

It catalyses the reaction O-phospho-L-tyrosyl-[protein] + H2O = L-tyrosyl-[protein] + phosphate. Functionally, dephosphorylates the phosphotyrosine-containing proteins. The protein is Low molecular weight protein-tyrosine-phosphatase PtpB (ptpB) of Staphylococcus haemolyticus (strain JCSC1435).